Reading from the N-terminus, the 1171-residue chain is Phytochrome B (1171 aa).

A compositionally biased stretch (low complexity) spans 1-19 (MASGSRATPTRSPSSARPA). The disordered stretch occupies residues 1-53 (MASGSRATPTRSPSSARPAAPRHQHHHSQSSGGSTSRAGGGGGGGGGGGGGAA). The segment covering 38 to 52 (AGGGGGGGGGGGGGA) has biased composition (gly residues). A GAF domain is found at 259 to 442 (DVKLLCDTVV…AFGLQLNMEL (184 aa)). A phytochromobilin-binding site is contributed by Cys-364. PAS domains lie at 661–732 (VARE…LRGD) and 795–866 (DYKA…MIVL). The 219-residue stretch at 943–1161 (YIYQEIKNPL…FFHIVLELPQ (219 aa)) folds into the Histidine kinase domain.

This sequence belongs to the phytochrome family. Homodimer. Contains one covalently linked phytochromobilin chromophore.

Its function is as follows. Regulatory photoreceptor which exists in two forms that are reversibly interconvertible by light: the Pr form that absorbs maximally in the red region of the spectrum and the Pfr form that absorbs maximally in the far-red region. Photoconversion of Pr to Pfr induces an array of morphogenic responses, whereas reconversion of Pfr to Pr cancels the induction of those responses. Pfr controls the expression of a number of nuclear genes including those encoding the small subunit of ribulose-bisphosphate carboxylase, chlorophyll A/B binding protein, protochlorophyllide reductase, rRNA, etc. It also controls the expression of its own gene(s) in a negative feedback fashion. The sequence is that of Phytochrome B (PHYB) from Oryza sativa subsp. japonica (Rice).